The chain runs to 541 residues: Peptidyl-alpha-hydroxyglycine alpha-amidating lyase 1 (541 aa).

A signal peptide spans 1-33 (MKSTDSAKCLGSKSLAICCLLLHLLLCIRPAVS). Residues 34 to 458 (QTQSPQRYLH…VAVHHPSGKA (425 aa)) are Extracellular-facing. Asparagine 92 is a glycosylation site (N-linked (GlcNAc...) asparagine). NHL repeat units follow at residues 164-205 (GKVQ…FPPR), 215-258 (LGDA…YSRK), and 272-314 (GISY…FLSS). 2 cysteine pairs are disulfide-bonded: cysteine 228/cysteine 248 and cysteine 299/cysteine 310. A glycan (N-linked (GlcNAc...) asparagine) is linked at asparagine 315. One copy of the NHL 4 repeat lies at 374–418 (KQLVSKFGPNNLQFQNPHDVAVTADGNEIYVAELNPMRIHKFVHR). The chain crosses the membrane as a helical span at residues 459-479 (ILVASLMLLFAGSTFALALIF). The Cytoplasmic segment spans residues 480-541 (ARRRKRGCLP…TKTLASAQYA (62 aa)). The interval 521–541 (LDQQASDEEQETKTLASAQYA) is disordered.

It belongs to the peptidyl-alpha-hydroxyglycine alpha-amidating lyase family. Requires Zn(2+) as cofactor. Post-translationally, N-glycosylated. As to expression, widely expressed. In mature larvae, it is ubiquitously expressed with a low expression in all cells and a stronger expression in a subset of neurons. Colocalizes with neuropeptide proctolin. In adults, weak expression is observed in most neuronal cell bodies and in scattered large cells throughout the protocerebrum and also in the subesophageal neuromeres (at protein level).

The protein resides in the cell membrane. The enzyme catalyses a [peptide]-C-terminal (2S)-2-hydroxyglycine = a [peptide]-C-terminal amide + glyoxylate. Functionally, peptidyl-alpha-hydroxylglycine alpha-amidating lyase that catalyzes an essential reaction in C-terminal alpha-amidation of peptides. Mediates the dismutation of the unstable peptidyl(2-hydroxyglycine) intermediate to glyoxylate and the corresponding desglycine peptide amide. C-terminal amidation of peptides such as neuropeptides is essential for full biological activity. This is Peptidyl-alpha-hydroxyglycine alpha-amidating lyase 1 (Pal1) from Drosophila melanogaster (Fruit fly).